The chain runs to 251 residues: Small ribosomal subunit protein uS2 (251 aa).

Residues 232 to 251 (EAIAEMDEQVEEDAEEASND) form a disordered region.

It belongs to the universal ribosomal protein uS2 family.

This is Small ribosomal subunit protein uS2 from Chlorobaculum parvum (strain DSM 263 / NCIMB 8327) (Chlorobium vibrioforme subsp. thiosulfatophilum).